A 115-amino-acid polypeptide reads, in one-letter code: NAD(P)H-quinone oxidoreductase subunit M (115 aa).

This sequence belongs to the complex I NdhM subunit family. As to quaternary structure, NDH-1 can be composed of about 15 different subunits; different subcomplexes with different compositions have been identified which probably have different functions.

Its subcellular location is the cellular thylakoid membrane. It carries out the reaction a plastoquinone + NADH + (n+1) H(+)(in) = a plastoquinol + NAD(+) + n H(+)(out). The catalysed reaction is a plastoquinone + NADPH + (n+1) H(+)(in) = a plastoquinol + NADP(+) + n H(+)(out). NDH-1 shuttles electrons from an unknown electron donor, via FMN and iron-sulfur (Fe-S) centers, to quinones in the respiratory and/or the photosynthetic chain. The immediate electron acceptor for the enzyme in this species is believed to be plastoquinone. Couples the redox reaction to proton translocation, and thus conserves the redox energy in a proton gradient. Cyanobacterial NDH-1 also plays a role in inorganic carbon-concentration. This Prochlorococcus marinus (strain MIT 9211) protein is NAD(P)H-quinone oxidoreductase subunit M.